A 340-amino-acid chain; its full sequence is Sulfotransferase ppzF (340 aa).

It participates in secondary metabolite biosynthesis. Sulfotransferase; part of the gene cluster that mediates the biosynthesis of pyrrolopyrazines, secondary metabolites showing insecticidal activity. The role of ppzF within the pathway has still to be determined. The single multifunctional NRPS ppzA is sufficient to produce peramine via condensation of 1-pyrroline-5-carboxylate and arginine, N-methylation of the alpha-amino group of arginine and reduction of the thioester and the cyclization to form an iminium ion resulting in release from the peptide synthetase. Deprotonation of this intermediate and oxidation of the pyrroline ring would give rise to peramine. In Epichloe species that produce only peramine, the peramine synthetase gene is not localized in a gene cluster, in contrast to Metarhizium species that contain additional pyrrolopyrazine biosynthesis genes. The 2-oxoglutarate-Fe(II) type oxidoreductase ppzC hydroxylates peramine to yield the newly identified compound 8-hydroxyperamine whereas ppzD converts L-proline into trans-4-hydroxy-L-proline, a precursor of peramine biosynthesis. The chain is Sulfotransferase ppzF from Metarhizium rileyi (strain RCEF 4871) (Nomuraea rileyi).